Consider the following 132-residue polypeptide: ATP synthase epsilon chain (132 aa).

The protein belongs to the ATPase epsilon chain family. As to quaternary structure, F-type ATPases have 2 components, CF(1) - the catalytic core - and CF(0) - the membrane proton channel. CF(1) has five subunits: alpha(3), beta(3), gamma(1), delta(1), epsilon(1). CF(0) has three main subunits: a, b and c.

It localises to the cell inner membrane. Functionally, produces ATP from ADP in the presence of a proton gradient across the membrane. The polypeptide is ATP synthase epsilon chain (Anaeromyxobacter dehalogenans (strain 2CP-1 / ATCC BAA-258)).